A 66-amino-acid polypeptide reads, in one-letter code: Omega conotoxin-CVIE (66 aa).

The N-terminal stretch at 1-17 is a signal peptide; the sequence is VVIVAVLLLTACQLITA. A propeptide spanning residues 18 to 40 is cleaved from the precursor; sequence NDSRGTQKHRALRSDTKLSMSTR. Intrachain disulfides connect Cys-41–Cys-56, Cys-48–Cys-60, and Cys-55–Cys-65. Residue Cys-65 is modified to Cysteine amide.

Belongs to the conotoxin O1 superfamily. As to expression, expressed by the venom duct.

It localises to the secreted. In terms of biological role, omega-conotoxins act at presynaptic membranes, they bind and block voltage-gated calcium channels. This toxin blocks N-type calcium channels (Cav2.2/CACNA1B). It shows a higher potency when Cav2.2/CACNA1B is only expressed with the ancillary subunit CACNB3 (IC(50)=0.12 nM) than on Cav2.2/CACNA1B expressed with the ancillary subunits CACNA2D1 and CACNB3 (IC(50)=2.6 nM). The Cav2.2/CACNA1B block by this toxin is voltage-independent, whereas the recovery from toxin block is voltage-dependent. There is a low recovery at physiological membrane potential and a high recovery with hyperpolarized potential. This indicates that the toxin has a higher affinity for Cav2.2/CACNA1B in the inactivated state. It is noteworthy that ancillary subunits beta modulate recovery from this toxin block. Cav2.2/CACNA1B expressed with the ancillary subunit CACNB2a (isoform 2a) almost recover completely from this toxin block, whereas Cav2.2/CACNA1B expressed with CACNB3 exhibits relatively weak recovery. Inhibition by this toxin of excitatory synaptic transmission is reversible. In vivo, when tested on rat model of persistent pain, this toxin blocks chronic pain behavior. This chain is Omega conotoxin-CVIE, found in Conus catus (Cat cone).